Consider the following 224-residue polypeptide: Flagellar L-ring protein (224 aa).

The N-terminal stretch at 1–15 (MKWYLVALSGLLLSG) is a signal peptide. The N-palmitoyl cysteine moiety is linked to residue cysteine 16. Cysteine 16 carries S-diacylglycerol cysteine lipidation.

It belongs to the FlgH family. In terms of assembly, the basal body constitutes a major portion of the flagellar organelle and consists of four rings (L,P,S, and M) mounted on a central rod.

Its subcellular location is the cell outer membrane. It localises to the bacterial flagellum basal body. Assembles around the rod to form the L-ring and probably protects the motor/basal body from shearing forces during rotation. The protein is Flagellar L-ring protein of Trichlorobacter lovleyi (strain ATCC BAA-1151 / DSM 17278 / SZ) (Geobacter lovleyi).